The chain runs to 257 residues: Snake venom serine protease KN9 (257 aa).

An N-terminal signal peptide occupies residues 1-18 (MVLIRVLANLLILQLSYA). Residues 19 to 24 (QKSSEL) constitute a propeptide that is removed on maturation. In terms of domain architecture, Peptidase S1 spans 25-248 (VVGGDECNIN…HLDWIKSIIA (224 aa)). Cystine bridges form between Cys-31–Cys-162, Cys-49–Cys-65, Cys-141–Cys-209, Cys-173–Cys-188, and Cys-199–Cys-224. The Charge relay system role is filled by His-64. N-linked (GlcNAc...) asparagine glycosylation is present at Asn-102. The active-site Charge relay system is the Asp-109. Asn-120 and Asn-121 each carry an N-linked (GlcNAc...) asparagine glycan. Ser-203 serves as the catalytic Charge relay system.

It belongs to the peptidase S1 family. Snake venom subfamily. In terms of assembly, monomer. In terms of tissue distribution, expressed by the venom gland.

It is found in the secreted. In terms of biological role, snake venom serine protease that may act in the hemostasis system of the prey. The protein is Snake venom serine protease KN9 of Trimeresurus stejnegeri (Chinese green tree viper).